A 314-amino-acid chain; its full sequence is Malate dehydrogenase (314 aa).

NAD(+) is bound by residues 11–16 and Asp35; that span reads GSGNIG. Residues Arg84 and Arg90 each contribute to the substrate site. Residues Asn97 and 120-122 each bind NAD(+); that span reads ITN. Substrate-binding residues include Asn122 and Arg153. His177 (proton acceptor) is an active-site residue.

Belongs to the LDH/MDH superfamily. MDH type 3 family.

It carries out the reaction (S)-malate + NAD(+) = oxaloacetate + NADH + H(+). Catalyzes the reversible oxidation of malate to oxaloacetate. This is Malate dehydrogenase from Rickettsia bellii (strain OSU 85-389).